We begin with the raw amino-acid sequence, 463 residues long: Glutamate--tRNA ligase 1 (463 aa).

The 'HIGH' region motif lies at 10–20 (PSPTGYLHIGG). A 'KMSKS' region motif is present at residues 238-242 (KLSKR). Lys241 provides a ligand contact to ATP.

Belongs to the class-I aminoacyl-tRNA synthetase family. Glutamate--tRNA ligase type 1 subfamily. Monomer.

The protein localises to the cytoplasm. The catalysed reaction is tRNA(Glu) + L-glutamate + ATP = L-glutamyl-tRNA(Glu) + AMP + diphosphate. Catalyzes the attachment of glutamate to tRNA(Glu) in a two-step reaction: glutamate is first activated by ATP to form Glu-AMP and then transferred to the acceptor end of tRNA(Glu). The sequence is that of Glutamate--tRNA ligase 1 from Helicobacter pylori (strain P12).